The following is a 327-amino-acid chain: tRNA dimethylallyltransferase (327 aa).

Glycine 14–threonine 21 provides a ligand contact to ATP. Residue threonine 16–threonine 21 coordinates substrate. 2 interaction with substrate tRNA regions span residues aspartate 39–leucine 42 and glutamine 163–arginine 167.

This sequence belongs to the IPP transferase family. As to quaternary structure, monomer. Requires Mg(2+) as cofactor.

It catalyses the reaction adenosine(37) in tRNA + dimethylallyl diphosphate = N(6)-dimethylallyladenosine(37) in tRNA + diphosphate. In terms of biological role, catalyzes the transfer of a dimethylallyl group onto the adenine at position 37 in tRNAs that read codons beginning with uridine, leading to the formation of N6-(dimethylallyl)adenosine (i(6)A). The protein is tRNA dimethylallyltransferase of Xanthomonas axonopodis pv. citri (strain 306).